The sequence spans 553 residues: Glycerol kinase 2 (553 aa).

Thr-20 provides a ligand contact to substrate. ATP is bound at residue Arg-24. Residues Arg-94, Tyr-148, and Asp-259 each contribute to the substrate site. ATP-binding positions include Thr-281, Gly-326, and 427–431; that span reads GMTNN. The helical transmembrane segment at 526 to 546 threads the bilayer; the sequence is IFSSLPLGFFIVSSMVMLIGA.

It belongs to the FGGY kinase family. As to quaternary structure, interacts with ARMC12. Interacts with PLD6. Testis-specific. Expressed in the midpiece of spermatozoa.

It localises to the mitochondrion outer membrane. The protein localises to the cytoplasm. It catalyses the reaction glycerol + ATP = sn-glycerol 3-phosphate + ADP + H(+). Its pathway is polyol metabolism; glycerol degradation via glycerol kinase pathway; sn-glycerol 3-phosphate from glycerol: step 1/1. In terms of biological role, key enzyme in the regulation of glycerol uptake and metabolism. Essential for male fertility and sperm mitochondrial sheath formation. Required for proper arrangement of crescent-like mitochondria to form the mitochondrial sheath during spermatogenesis. Can induce mitochondrial clustering through interactions with PLD6 and up-regulation of phosphatidic acid synthesis in the mitochondria. The chain is Glycerol kinase 2 (GK2) from Homo sapiens (Human).